The following is a 447-amino-acid chain: Argininosuccinate synthase (447 aa).

ATP-binding positions include 17–25 and Ala43; that span reads AFSGGLDTS. Residue Tyr99 coordinates L-citrulline. ATP contacts are provided by Gly129 and Thr131. Thr131, Asn135, and Asp136 together coordinate L-aspartate. Asn135 provides a ligand contact to L-citrulline. Residue Asp136 coordinates ATP. Residues Arg139 and Ser192 each contribute to the L-citrulline site. Residue Asp194 coordinates ATP. The L-citrulline site is built by Thr201, Glu203, and Glu280.

This sequence belongs to the argininosuccinate synthase family. Type 2 subfamily. Homotetramer.

The protein resides in the cytoplasm. The enzyme catalyses L-citrulline + L-aspartate + ATP = 2-(N(omega)-L-arginino)succinate + AMP + diphosphate + H(+). Its pathway is amino-acid biosynthesis; L-arginine biosynthesis; L-arginine from L-ornithine and carbamoyl phosphate: step 2/3. In Escherichia coli O157:H7, this protein is Argininosuccinate synthase (argG).